A 331-amino-acid chain; its full sequence is Olfactory receptor 6B3 (331 aa).

Over 1 to 25 (MSGENVTRVGTFILVGFPTAPGLQY) the chain is Extracellular. Asn-5 is a glycosylation site (N-linked (GlcNAc...) asparagine). The helical transmembrane segment at 26-46 (LLFLLFLLTYLFVLVENLAII) threads the bilayer. Residues 47–54 (LTVWSSTS) lie on the Cytoplasmic side of the membrane. The chain crosses the membrane as a helical span at residues 55-75 (LHRPMYYFLSSMSFLEIWYVS). Topologically, residues 76–99 (DITPKMLEGFLLQQKRISFVGCMT) are extracellular. Cys-97 and Cys-189 form a disulfide bridge. A helical transmembrane segment spans residues 100–120 (QLYFFSSLVCTECVLLASMAY). Residues 121–139 (DRYVAICHPLRYHVLVTPG) are Cytoplasmic-facing. The chain crosses the membrane as a helical span at residues 140-160 (LCLQLVGFSFVSGFTISMIKV). The Extracellular portion of the chain corresponds to 161 to 196 (CFISSVTFCGSNVLNHFFCDISPILKLACTDFSTAE). The helical transmembrane segment at 197 to 217 (LVDFILAFIILVFPLLATMLS) threads the bilayer. The Cytoplasmic portion of the chain corresponds to 218–237 (YAHITLAVLRIPSATGCWRA). Residues 238–258 (FFTCASHLTVVTVFYTALLFM) form a helical membrane-spanning segment. Over 259 to 271 (YVRPQAIDSRSSN) the chain is Extracellular. Residues 272–292 (KLISVLYTVITPILNPLIYCL) traverse the membrane as a helical segment. Residues 293-331 (RNKEFKNALKKAFGLTSCAVEGRLSSLLELHLQIHSQPL) are Cytoplasmic-facing.

This sequence belongs to the G-protein coupled receptor 1 family.

The protein localises to the cell membrane. Functionally, odorant receptor. This chain is Olfactory receptor 6B3 (OR6B3), found in Homo sapiens (Human).